A 948-amino-acid polypeptide reads, in one-letter code: Bifunctional glutamine synthetase adenylyltransferase/adenylyl-removing enzyme (948 aa).

Positions 1–445 (MAPPPDTSGS…IFTEVIAEPP (445 aa)) are adenylyl removase. The interval 451-948 (EPLLDGGEAE…WKQIIEAPVF (498 aa)) is adenylyl transferase.

It belongs to the GlnE family. Mg(2+) serves as cofactor.

It catalyses the reaction [glutamine synthetase]-O(4)-(5'-adenylyl)-L-tyrosine + phosphate = [glutamine synthetase]-L-tyrosine + ADP. It carries out the reaction [glutamine synthetase]-L-tyrosine + ATP = [glutamine synthetase]-O(4)-(5'-adenylyl)-L-tyrosine + diphosphate. Its function is as follows. Involved in the regulation of glutamine synthetase GlnA, a key enzyme in the process to assimilate ammonia. When cellular nitrogen levels are high, the C-terminal adenylyl transferase (AT) inactivates GlnA by covalent transfer of an adenylyl group from ATP to specific tyrosine residue of GlnA, thus reducing its activity. Conversely, when nitrogen levels are low, the N-terminal adenylyl removase (AR) activates GlnA by removing the adenylyl group by phosphorolysis, increasing its activity. The regulatory region of GlnE binds the signal transduction protein PII (GlnB) which indicates the nitrogen status of the cell. The chain is Bifunctional glutamine synthetase adenylyltransferase/adenylyl-removing enzyme from Methylococcus capsulatus (strain ATCC 33009 / NCIMB 11132 / Bath).